We begin with the raw amino-acid sequence, 530 residues long: Inactive ubiquitin carboxyl-terminal hydrolase 17-like protein 8 (530 aa).

The 296-residue stretch at alanine 80–lysine 375 folds into the USP domain. A compositionally biased stretch (basic and acidic residues) spans serine 382–arginine 392. Disordered regions lie at residues serine 382 to histidine 412 and asparagine 493 to glutamine 530. Positions threonine 495–glycine 510 are enriched in polar residues. The span at arginine 511 to arginine 524 shows a compositional bias: basic residues.

The protein belongs to the peptidase C19 family. USP17 subfamily.

Its subcellular location is the nucleus. It localises to the endoplasmic reticulum. The sequence is that of Inactive ubiquitin carboxyl-terminal hydrolase 17-like protein 8 (USP17L8) from Homo sapiens (Human).